Consider the following 1098-residue polypeptide: Gramicidin S synthase 1 (1098 aa).

Residues 538 to 612 enclose the Carrier domain; the sequence is APRNEIEETL…QLVHYIKDSK (75 aa). Serine 573 is modified (O-(pantetheine 4'-phosphoryl)serine).

The protein belongs to the ATP-dependent AMP-binding enzyme family. As to quaternary structure, large multienzyme complex of GrsA and GrsB. Pantetheine 4'-phosphate is required as a cofactor.

The enzyme catalyses L-phenylalanine + ATP + H2O = D-phenylalanine + AMP + diphosphate + H(+). Its pathway is antibiotic biosynthesis; gramicidin S biosynthesis. In terms of biological role, in the first step of peptide synthesis this enzyme activates phenylalanine and racemizes it to the D-isomer. The sequence is that of Gramicidin S synthase 1 (grsA) from Brevibacillus brevis (Bacillus brevis).